We begin with the raw amino-acid sequence, 428 residues long: Type II methyltransferase M.TthHB8I (428 aa).

The tract at residues 407–428 (RKGNTERRKHGPYTSPESAGSF) is disordered.

Belongs to the N(4)/N(6)-methyltransferase family.

It catalyses the reaction a 2'-deoxyadenosine in DNA + S-adenosyl-L-methionine = an N(6)-methyl-2'-deoxyadenosine in DNA + S-adenosyl-L-homocysteine + H(+). Its function is as follows. A gamma subtype methylase, recognizes the double-stranded sequence 5'-TCGA-3', methylates A-4 on both strands and protects the DNA from cleavage by the TthHB8I endonuclease. This Thermus thermophilus (strain ATCC 27634 / DSM 579 / HB8) protein is Type II methyltransferase M.TthHB8I.